A 926-amino-acid polypeptide reads, in one-letter code: Alanine--tRNA ligase (926 aa).

Zn(2+)-binding residues include His-611, His-615, Cys-714, and His-718.

Belongs to the class-II aminoacyl-tRNA synthetase family. Zn(2+) serves as cofactor.

Its subcellular location is the cytoplasm. The catalysed reaction is tRNA(Ala) + L-alanine + ATP = L-alanyl-tRNA(Ala) + AMP + diphosphate. Functionally, catalyzes the attachment of alanine to tRNA(Ala) in a two-step reaction: alanine is first activated by ATP to form Ala-AMP and then transferred to the acceptor end of tRNA(Ala). Also edits incorrectly charged Ser-tRNA(Ala) and Gly-tRNA(Ala) via its editing domain. This chain is Alanine--tRNA ligase, found in Methanosarcina mazei (strain ATCC BAA-159 / DSM 3647 / Goe1 / Go1 / JCM 11833 / OCM 88) (Methanosarcina frisia).